A 341-amino-acid polypeptide reads, in one-letter code: 4-hydroxy-2-oxovalerate aldolase (341 aa).

Residues 9–260 (VVITDSTLRD…ATGIDLYRVL (252 aa)) form the Pyruvate carboxyltransferase domain. Residue 17–18 (RD) participates in substrate binding. Mn(2+) is bound at residue D18. H21 (proton acceptor) is an active-site residue. Residues S172 and H199 each contribute to the substrate site. Residues H199 and H201 each coordinate Mn(2+).

It belongs to the 4-hydroxy-2-oxovalerate aldolase family.

It catalyses the reaction (S)-4-hydroxy-2-oxopentanoate = acetaldehyde + pyruvate. In Spirochaeta aurantia, this protein is 4-hydroxy-2-oxovalerate aldolase.